A 101-amino-acid chain; its full sequence is Small ribosomal subunit protein uS14 (101 aa).

This sequence belongs to the universal ribosomal protein uS14 family. As to quaternary structure, part of the 30S ribosomal subunit. Contacts proteins S3 and S10.

Its function is as follows. Binds 16S rRNA, required for the assembly of 30S particles and may also be responsible for determining the conformation of the 16S rRNA at the A site. In Leifsonia xyli subsp. xyli (strain CTCB07), this protein is Small ribosomal subunit protein uS14.